Reading from the N-terminus, the 558-residue chain is D-xylose-proton symporter-like 3, chloroplastic (558 aa).

The N-terminal 31 residues, 1-31 (MAFAVSVQSHFAIRALKRDHFKNPSPRTFCS), are a transit peptide targeting the chloroplast. A run of 12 helical transmembrane segments spans residues 98–118 (VILPFIFPALGGLLFGYDIGA), 146–166 (LVVSGSLYGALLGSISVYGVA), 175–195 (LIIAAVLYLLGSLITGCAPDL), 197–217 (ILLVGRLLYGFGIGLAMHGAP), 238–258 (LFIVLGILLGFSVGSFQIDVV), 264–284 (MYGFGTPVALLMGLGMWSLPA), 359–379 (ALTIGGGLVLFQQITGQPSVL), 400–420 (VSVIIGVFKLLMTWVAVAKVD), 426–446 (PLLIGGVSGIALSLFLLSAYY), 449–469 (LGGFPLVAVGALLLYVGCYQI), 491–511 (GISLAVLTNFGSNAIVTFAFS), and 522–542 (LFLLFGGIALVSLLFVILVVP).

This sequence belongs to the major facilitator superfamily. Sugar transporter (TC 2.A.1.1) family.

The protein localises to the plastid. It is found in the chloroplast membrane. This chain is D-xylose-proton symporter-like 3, chloroplastic, found in Arabidopsis thaliana (Mouse-ear cress).